The following is a 308-amino-acid chain: Protein translocase subunit SecF (308 aa).

6 helical membrane-spanning segments follow: residues 28-48 (SIIL…NFGI), 140-160 (IEAG…YIWV), 164-184 (WYFG…ALGF), 194-214 (LSTI…SVVI), 246-266 (ILTV…GGEA), and 272-292 (ILVF…SAPI).

It belongs to the SecD/SecF family. SecF subfamily. Forms a complex with SecD. Part of the essential Sec protein translocation apparatus which comprises SecA, SecYEG and auxiliary proteins SecDF-YajC and YidC.

It localises to the cell inner membrane. Functionally, part of the Sec protein translocase complex. Interacts with the SecYEG preprotein conducting channel. SecDF uses the proton motive force (PMF) to complete protein translocation after the ATP-dependent function of SecA. This Rickettsia rickettsii (strain Sheila Smith) protein is Protein translocase subunit SecF.